The sequence spans 662 residues: DNA helicase/primase complex-associated protein (662 aa).

Belongs to the herpesviridae HEPA family. As to quaternary structure, associates with the primase and the helicase to form the helicase-primase complex. Interacts with the origin-binding protein. Interacts with the polymerase catalytic subunit.

Its subcellular location is the host nucleus. Functionally, component of the helicase/primase complex. Unwinds the DNA at the replication forks and generates single-stranded DNA for both leading and lagging strand synthesis. The primase synthesizes short RNA primers on the lagging strand that the polymerase presumably elongates using dNTPs. The primase-associated factor has no known catalytic activity in the complex and may serve to facilitate the formation of the replisome by directly interacting with the origin-binding protein and the polymerase. The sequence is that of DNA helicase/primase complex-associated protein (U74) from Human herpesvirus 6B (strain Z29) (HHV-6 variant B).